Here is a 123-residue protein sequence, read N- to C-terminus: Large ribosomal subunit protein uL24 (123 aa).

A disordered region spans residues 100 to 123 (RRPDGSTYKAERSVRISRKTGKEI).

It belongs to the universal ribosomal protein uL24 family. As to quaternary structure, part of the 50S ribosomal subunit.

One of two assembly initiator proteins, it binds directly to the 5'-end of the 23S rRNA, where it nucleates assembly of the 50S subunit. In terms of biological role, one of the proteins that surrounds the polypeptide exit tunnel on the outside of the subunit. This is Large ribosomal subunit protein uL24 from Nocardioides sp. (strain ATCC BAA-499 / JS614).